A 326-amino-acid chain; its full sequence is Tetraacyldisaccharide 4'-kinase (326 aa).

54–61 (SVGGTGKT) contributes to the ATP binding site.

The protein belongs to the LpxK family.

It carries out the reaction a lipid A disaccharide + ATP = a lipid IVA + ADP + H(+). The protein operates within glycolipid biosynthesis; lipid IV(A) biosynthesis; lipid IV(A) from (3R)-3-hydroxytetradecanoyl-[acyl-carrier-protein] and UDP-N-acetyl-alpha-D-glucosamine: step 6/6. In terms of biological role, transfers the gamma-phosphate of ATP to the 4'-position of a tetraacyldisaccharide 1-phosphate intermediate (termed DS-1-P) to form tetraacyldisaccharide 1,4'-bis-phosphate (lipid IVA). The sequence is that of Tetraacyldisaccharide 4'-kinase from Rickettsia canadensis (strain McKiel).